Consider the following 646-residue polypeptide: Long-chain fatty acid transport protein 1 (646 aa).

Residues methionine 1 to serine 13 lie on the Extracellular side of the membrane. A helical transmembrane segment spans residues leucine 14–valine 34. Topologically, residues tyrosine 35–leucine 646 are cytoplasmic. Residues glutamate 191–lysine 475 are sufficient for oligomerization. Tyrosine 246–lysine 257 lines the AMP pocket.

It belongs to the ATP-dependent AMP-binding enzyme family. In terms of assembly, self-associates. May function as a homodimer. Interacts with EPRS1; mediates the translocation of SLC27A1 from the cytoplasm to the plasma membrane thereby increasing the uptake of long-chain fatty acids. Interacts with DGAT2 and this interaction is enhanced in the presence of ZFYVE1. Highest levels of expression are detected in muscle and adipose tissue small, intermediate levels in small intestine, and barely detectable in liver. Expressed in brain gray matter.

The protein localises to the cell membrane. The protein resides in the endomembrane system. Its subcellular location is the cytoplasm. The catalysed reaction is a fatty acid(in) = a fatty acid(out). It catalyses the reaction (9Z)-octadecenoate(out) = (9Z)-octadecenoate(in). The enzyme catalyses hexadecanoate(out) = hexadecanoate(in). It carries out the reaction (9Z,12Z)-octadecadienoate(out) = (9Z,12Z)-octadecadienoate(in). The catalysed reaction is (5Z,8Z,11Z,14Z)-eicosatetraenoate(out) = (5Z,8Z,11Z,14Z)-eicosatetraenoate(in). It catalyses the reaction a long-chain fatty acid + ATP + CoA = a long-chain fatty acyl-CoA + AMP + diphosphate. The enzyme catalyses (5Z,8Z,11Z,14Z)-eicosatetraenoate + ATP + CoA = (5Z,8Z,11Z,14Z)-eicosatetraenoyl-CoA + AMP + diphosphate. It carries out the reaction a very long-chain fatty acid + ATP + CoA = a very long-chain fatty acyl-CoA + AMP + diphosphate. The catalysed reaction is tetracosanoate + ATP + CoA = tetracosanoyl-CoA + AMP + diphosphate. Its activity is regulated as follows. Inhibited by Triacsin C. In terms of biological role, mediates the import of long-chain fatty acids (LCFA) into the cell by facilitating their transport at the plasma membrane. Also functions as an acyl-CoA ligase catalyzing the ATP-dependent formation of fatty acyl-CoA using LCFA and very-long-chain fatty acids (VLCFA) as substrates, which prevents fatty acid efflux from cells and might drive more fatty acid uptake. May act directly as a bona fide transporter, or alternatively, in a cytoplasmic or membrane-associated multimeric protein complex to trap and draw fatty acids towards accumulation. Plays a pivotal role in regulating available LCFA substrates from exogenous sources in tissues undergoing high levels of beta-oxidation or triglyceride synthesis. May be involved in regulation of cholesterol metabolism. Probably involved in fatty acid transport across the blood barrier. The protein is Long-chain fatty acid transport protein 1 of Homo sapiens (Human).